A 229-amino-acid polypeptide reads, in one-letter code: Peptidyl-prolyl cis-trans isomerase FKBP17-1, chloroplastic (229 aa).

The transit peptide at 1 to 63 (MIRCFAWTPL…SISLSIIAVT (63 aa)) directs the protein to the chloroplast. The PPIase FKBP-type domain maps to 105 to 225 (GDQIEIHYYG…VFDIELVSTR (121 aa)).

It belongs to the FKBP-type PPIase family.

The protein localises to the plastid. It localises to the chloroplast thylakoid lumen. It catalyses the reaction [protein]-peptidylproline (omega=180) = [protein]-peptidylproline (omega=0). Its function is as follows. PPIases accelerate the folding of proteins. It catalyzes the cis-trans isomerization of proline imidic peptide bonds in oligopeptides. In Arabidopsis thaliana (Mouse-ear cress), this protein is Peptidyl-prolyl cis-trans isomerase FKBP17-1, chloroplastic (FKBP17-1).